We begin with the raw amino-acid sequence, 1068 residues long: Probable ATPase FE772_23070 (1068 aa).

Gly217–Thr224 contributes to the ATP binding site.

In terms of biological role, involved in defense against bacteriophages. When this probable 4 gene operon (bGSDM-FE772_23060-FE772_23065-FE772_23070) is inserted into E.coli it provides nearly 100-fold protection against phages T5 and T6 and about 8-fold against phage T4. The operon without bGSDM no longer protects against phage. Probably a nucleotide hydrolase, possibly of ATP. The polypeptide is Probable ATPase FE772_23070 (Lysobacter enzymogenes).